Here is a 225-residue protein sequence, read N- to C-terminus: Ribonuclease 3 (225 aa).

Residues 7–129 (IPRLCRTLGY…IIGAVYLDSD (123 aa)) form the RNase III domain. E42 is a binding site for Mg(2+). D46 is an active-site residue. Mg(2+) contacts are provided by D115 and E118. E118 is a catalytic residue. Residues 155–225 (DPKTLLQELL…AAQALELIKR (71 aa)) enclose the DRBM domain.

This sequence belongs to the ribonuclease III family. In terms of assembly, homodimer. It depends on Mg(2+) as a cofactor.

It localises to the cytoplasm. It catalyses the reaction Endonucleolytic cleavage to 5'-phosphomonoester.. In terms of biological role, digests double-stranded RNA. Involved in the processing of primary rRNA transcript to yield the immediate precursors to the large and small rRNAs (23S and 16S). Processes some mRNAs, and tRNAs when they are encoded in the rRNA operon. Processes pre-crRNA and tracrRNA of type II CRISPR loci if present in the organism. In Shewanella woodyi (strain ATCC 51908 / MS32), this protein is Ribonuclease 3.